The sequence spans 349 residues: Nicotinate-nucleotide--dimethylbenzimidazole phosphoribosyltransferase (349 aa).

Glu318 serves as the catalytic Proton acceptor.

Belongs to the CobT family.

It carries out the reaction 5,6-dimethylbenzimidazole + nicotinate beta-D-ribonucleotide = alpha-ribazole 5'-phosphate + nicotinate + H(+). Its pathway is nucleoside biosynthesis; alpha-ribazole biosynthesis; alpha-ribazole from 5,6-dimethylbenzimidazole: step 1/2. Functionally, catalyzes the synthesis of alpha-ribazole-5'-phosphate from nicotinate mononucleotide (NAMN) and 5,6-dimethylbenzimidazole (DMB). This Geobacter sp. (strain M21) protein is Nicotinate-nucleotide--dimethylbenzimidazole phosphoribosyltransferase.